Here is a 203-residue protein sequence, read N- to C-terminus: Peroxiredoxin (203 aa).

The region spanning 3-156 (VVLGQKAPDF…IIRVIKALQF (154 aa)) is the Thioredoxin domain. The active-site Cysteine sulfenic acid (-SOH) intermediate is Cys-44. Residue Arg-119 participates in substrate binding.

It belongs to the peroxiredoxin family. Prx6 subfamily. In terms of assembly, homodecamer. Pentamer of dimers that assemble into a ring structure.

The protein localises to the cytoplasm. The enzyme catalyses a hydroperoxide + [thioredoxin]-dithiol = an alcohol + [thioredoxin]-disulfide + H2O. Thiol-specific peroxidase that catalyzes the reduction of hydrogen peroxide and organic hydroperoxides to water and alcohols, respectively. Plays a role in cell protection against oxidative stress by detoxifying peroxides. This Thermoplasma volcanium (strain ATCC 51530 / DSM 4299 / JCM 9571 / NBRC 15438 / GSS1) protein is Peroxiredoxin.